The sequence spans 108 residues: Tetrahydromethanopterin S-methyltransferase subunit B (108 aa).

Residues 81–101 (FFGFWISLSILTLGLILVIGL) traverse the membrane as a helical segment.

Belongs to the MtrB family. In terms of assembly, the complex is composed of 8 subunits; MtrA, MtrB, MtrC, MtrD, MtrE, MtrF, MtrG and MtrH.

The protein resides in the cell membrane. The enzyme catalyses 5-methyl-5,6,7,8-tetrahydromethanopterin + coenzyme M + 2 Na(+)(in) = 5,6,7,8-tetrahydromethanopterin + methyl-coenzyme M + 2 Na(+)(out). It functions in the pathway one-carbon metabolism; methanogenesis from CO(2); methyl-coenzyme M from 5,10-methylene-5,6,7,8-tetrahydromethanopterin: step 2/2. Functionally, part of a complex that catalyzes the formation of methyl-coenzyme M and tetrahydromethanopterin from coenzyme M and methyl-tetrahydromethanopterin. This is an energy-conserving, sodium-ion translocating step. In Methanococcus aeolicus (strain ATCC BAA-1280 / DSM 17508 / OCM 812 / Nankai-3), this protein is Tetrahydromethanopterin S-methyltransferase subunit B.